A 283-amino-acid polypeptide reads, in one-letter code: MLIIETLPLLRQQIRRLRMEGKRVALVPTMGNLHDGHMKLVDEAKARADVVVVSIFVNPMQFDRPEDLARYPRTLQEDCEKLNKRKVDLVFAPSVKEIYPNGTETHTYVDVPGLSTMLEGASRPGHFRGVSTIVSKLFNLVQPDIACFGEKDFQQLALIRKMVADMGFDIEIVGVPIMRAKDGLALSSRNGYLTAEQRKIAPGLYKVLSSIADKLQAGERDLDEIIAIAGQELNEKGFRADDIQIRDADTLLEVSETSKRAVILVAAWLGDARLIDNKMVELA.

Met30 to His37 serves as a coordination point for ATP. Residue His37 is the Proton donor of the active site. Residue Gln61 coordinates (R)-pantoate. Position 61 (Gln61) interacts with beta-alanine. Position 149-152 (Gly149–Asp152) interacts with ATP. Gln155 serves as a coordination point for (R)-pantoate. Leu186–Arg189 lines the ATP pocket.

The protein belongs to the pantothenate synthetase family. In terms of assembly, homodimer.

It is found in the cytoplasm. It carries out the reaction (R)-pantoate + beta-alanine + ATP = (R)-pantothenate + AMP + diphosphate + H(+). It functions in the pathway cofactor biosynthesis; (R)-pantothenate biosynthesis; (R)-pantothenate from (R)-pantoate and beta-alanine: step 1/1. Functionally, catalyzes the condensation of pantoate with beta-alanine in an ATP-dependent reaction via a pantoyl-adenylate intermediate. In Escherichia coli O157:H7, this protein is Pantothenate synthetase.